A 634-amino-acid chain; its full sequence is RNA polymerase sigma factor RpoD (634 aa).

The disordered stretch occupies residues 177–202 (LHDETPENDEENSSETEGEEHEDNHL). Positions 182 to 197 (PENDEENSSETEGEEH) are enriched in acidic residues. The segment at 385–455 (MIEANLRLVI…TRAIADQART (71 aa)) is sigma-70 factor domain-2. The Interaction with polymerase core subunit RpoC signature appears at 409–412 (DLIQ). The segment at 464-541 (ETINKILRTS…DKNAVAPIDA (78 aa)) is sigma-70 factor domain-3. The tract at residues 554-607 (VLATLTPREERVLRMRFGIGMNTDHTLEEVGQQFKVTRERIRQIESKALRKLQH) is sigma-70 factor domain-4. The H-T-H motif DNA-binding region spans 580–599 (LEEVGQQFKVTRERIRQIES). The interval 608 to 634 (PIRSKKLNSFRSGGKRGDGNSSDLLEA) is disordered.

This sequence belongs to the sigma-70 factor family. RpoD/SigA subfamily. As to quaternary structure, interacts transiently with the RNA polymerase catalytic core.

The protein resides in the cytoplasm. Its function is as follows. Sigma factors are initiation factors that promote the attachment of RNA polymerase to specific initiation sites and are then released. This sigma factor is the primary sigma factor during exponential growth. This Rickettsia conorii (strain ATCC VR-613 / Malish 7) protein is RNA polymerase sigma factor RpoD.